We begin with the raw amino-acid sequence, 96 residues long: UPF0213 protein BCE_0033 (96 aa).

The GIY-YIG domain occupies 4–79 (NKHCFYVVEC…KQLNRKQKEE (76 aa)).

Belongs to the UPF0213 family.

The protein is UPF0213 protein BCE_0033 of Bacillus cereus (strain ATCC 10987 / NRS 248).